We begin with the raw amino-acid sequence, 40 residues long: Photosystem II reaction center protein J (40 aa).

The helical transmembrane segment at 8–28 threads the bilayer; the sequence is IPLWIIGTVTGIPVIGLIGIF.

This sequence belongs to the PsbJ family. As to quaternary structure, PSII is composed of 1 copy each of membrane proteins PsbA, PsbB, PsbC, PsbD, PsbE, PsbF, PsbH, PsbI, PsbJ, PsbK, PsbL, PsbM, PsbT, PsbX, PsbY, PsbZ, Psb30/Ycf12, at least 3 peripheral proteins of the oxygen-evolving complex and a large number of cofactors. It forms dimeric complexes.

It localises to the plastid. Its subcellular location is the chloroplast thylakoid membrane. One of the components of the core complex of photosystem II (PSII). PSII is a light-driven water:plastoquinone oxidoreductase that uses light energy to abstract electrons from H(2)O, generating O(2) and a proton gradient subsequently used for ATP formation. It consists of a core antenna complex that captures photons, and an electron transfer chain that converts photonic excitation into a charge separation. The polypeptide is Photosystem II reaction center protein J (Citrus sinensis (Sweet orange)).